An 887-amino-acid chain; its full sequence is MAKSSADDEELRRACEAAIEGTKQSIVMSIRVAKSRGVWGKSGKLGRQMAKPRVLALSVKSKGPRKKAFLRVMKYSSGGVLEPAKMYKLKHLSKVEVITNDPSGCTFTLGFDNLRSQSVAPPQWTMRNTDDRNRLLVCILNICKDVLGRLPKVVGIDIVEMALWAKDNTPVVTTQRSTEDGEPVAESVTESDLKVTVEKELVSQAEEEDMEALLGTYVMGIGEAEAFSERLKRELQALEAANVHAILESEPLVDEVLNGLEAATNIVDDMDEWLGIFNIKLRHMREDIESIETRNNKLEMQSVNNKALIEELDKVIERLRVPSEYAASLTGGSFDEADMLQNIEACEWLAKALRGLEVPNLDPIYANMRAVKEKRAELEKLKATFVRRASEFLRNYFASLVDFMVSDKSYFSQRGQLKRPDHADLRYKCRTYARLLQHLKGLDKNCLGPLRKAYCSSLNLLLRREAREFANELRASTKVSRNPTVWLEGSTGSSQNANTDTSAVSDAYAKMLTIFIPLLVDESSFFAHFMCFEVPALAPPGGAGNDKKSQSNNDDGNDDDDLGIMDIDETDKKPGKNSPDLTALNESLQDLLDGIQEDFYAVVDWAYKIDPLRCISMHGITERYLSGQKADAAGFVRLLLGDLESRVSMQFSRFVDEACHQIERNERNVRQMGVLPYIPRFAALATRMEQYIQGQSRDLVDQAYTKFVSIMFVTLEKIAQQDPKYADILLLENYAAFQNSLYDLANVVPTLAKFYHQASEAYEQACTRHISMIIYYQFERLFQFAKKIEDFMYTITPEEIPFQLGLSKVELRKMLKSSLSGVDKSIAAMYKKLQKNLASEELLPSLWDKCKKEFLDKYESFVQLVAKVYPSENVPGVTEMRGLLASM.

Coiled coils occupy residues 221-248 (IGEA…AILE) and 281-301 (LRHM…LEMQ). Residues 542 to 581 (GAGNDKKSQSNNDDGNDDDDLGIMDIDETDKKPGKNSPDL) are disordered. Residues 555 to 569 (DGNDDDDLGIMDIDE) are compositionally biased toward acidic residues.

This sequence belongs to the SEC3 family. As to quaternary structure, the exocyst complex is composed of SEC3, SEC5, SEC6, SEC8, SEC10, EXO70A1 and EXO84B. Interacts with EXO70A1, SEC5A and ICR1, but not with ICR2. Binds to EXO70H1. Binds directly to B1L. In terms of tissue distribution, widely expressed. Preferentially expressed in tissues containing dividing and expanding cells, such as the shoot apical meristem, root tip, lateral root primordia and developing embryos.

The protein localises to the cytoplasm. The protein resides in the cytosol. It is found in the cell membrane. Its subcellular location is the cytoskeleton. It localises to the phragmoplast. The protein localises to the secreted. The protein resides in the extracellular exosome. Component of the exocyst complex involved in the docking of exocytic vesicles with fusion sites on the plasma membrane during regulated or polarized secretion. Involved in polarized cell growth and organ morphogenesis. During cytokinesis, involved in cell plate initiation, cell plate maturation and formation of new primary cell wall. During cytokinesis, involved in cell plate initiation, cell plate maturation and formation of new primary cell wall. This Arabidopsis thaliana (Mouse-ear cress) protein is Exocyst complex component SEC3A.